Consider the following 120-residue polypeptide: MFVLTGYEYFLGFLFICSLVPVLALTASKLLRPRDGGPERQTTYESGMEPIGGAWIQFNIRYYMFALVFVVFDVETVFLYPWAVAFNQLGLLAFVEALIFIAILVVALVYAWRKGALEWS.

Transmembrane regions (helical) follow at residues 2-22 (FVLTGYEYFLGFLFICSLVPV), 64-84 (MFALVFVVFDVETVFLYPWAV), and 89-109 (LGLLAFVEALIFIAILVVALV).

This sequence belongs to the complex I subunit 3 family. As to quaternary structure, NDH-1 can be composed of about 15 different subunits; different subcomplexes with different compositions have been identified which probably have different functions.

It is found in the cellular thylakoid membrane. It catalyses the reaction a plastoquinone + NADH + (n+1) H(+)(in) = a plastoquinol + NAD(+) + n H(+)(out). The catalysed reaction is a plastoquinone + NADPH + (n+1) H(+)(in) = a plastoquinol + NADP(+) + n H(+)(out). NDH-1 shuttles electrons from an unknown electron donor, via FMN and iron-sulfur (Fe-S) centers, to quinones in the respiratory and/or the photosynthetic chain. The immediate electron acceptor for the enzyme in this species is believed to be plastoquinone. Couples the redox reaction to proton translocation, and thus conserves the redox energy in a proton gradient. Cyanobacterial NDH-1 also plays a role in inorganic carbon-concentration. The chain is NAD(P)H-quinone oxidoreductase subunit 3 (ndhC) from Synechocystis sp. (strain ATCC 27184 / PCC 6803 / Kazusa).